Reading from the N-terminus, the 324-residue chain is Bis(5'-nucleosyl)-tetraphosphatase, symmetrical (324 aa).

The disordered stretch occupies residues proline 269–glutamate 324. A compositionally biased stretch (basic residues) spans alanine 282–glycine 297. Gly residues predominate over residues glycine 298–glycine 309. Positions asparagine 310–glutamate 324 are enriched in low complexity.

Belongs to the Ap4A hydrolase family.

It carries out the reaction P(1),P(4)-bis(5'-adenosyl) tetraphosphate + H2O = 2 ADP + 2 H(+). Functionally, hydrolyzes diadenosine 5',5'''-P1,P4-tetraphosphate to yield ADP. The polypeptide is Bis(5'-nucleosyl)-tetraphosphatase, symmetrical (Xanthomonas campestris pv. campestris (strain ATCC 33913 / DSM 3586 / NCPPB 528 / LMG 568 / P 25)).